We begin with the raw amino-acid sequence, 63 residues long: MKISCFLLLVLSLYLFQVNQATDQDTAKCVQKKNVCYYFECPWLSISVSTCYKGKAKCCQKRY.

Positions methionine 1 to alanine 21 are cleaved as a signal peptide. Intrachain disulfides connect cysteine 29-cysteine 58, cysteine 36-cysteine 51, and cysteine 41-cysteine 59.

This sequence belongs to the beta-defensin family.

Its subcellular location is the secreted. In terms of biological role, has antibacterial activity. The sequence is that of Beta-defensin 38 (Defb38) from Rattus norvegicus (Rat).